A 583-amino-acid chain; its full sequence is R-linalool synthase QH5, chloroplastic (583 aa).

The N-terminal 40 residues, 1–40, are a transit peptide targeting the chloroplast; that stretch reads MASISLFPYSILKQTSPLARGTAYNRIYSTKTTGITVDVA. (2E)-geranyl diphosphate-binding residues include arginine 298, aspartate 335, aspartate 339, arginine 476, and aspartate 479. Residues aspartate 335 and aspartate 339 each contribute to the Mg(2+) site. The short motif at 335–339 is the DDXXD motif element; sequence DDVYD. Residues aspartate 479, threonine 483, and glutamate 487 each coordinate Mg(2+). Aspartate 492 lines the K(+) pocket.

Belongs to the terpene synthase family. Tpsb subfamily. Mg(2+) is required as a cofactor. Mn(2+) serves as cofactor. The cofactor is K(+). In terms of tissue distribution, expressed in every aerial organ except for the stem stele of mature plants. Not detected in roots.

It localises to the plastid. It is found in the chloroplast. The catalysed reaction is (2E)-geranyl diphosphate + H2O = (R)-linalool + diphosphate. The protein operates within secondary metabolite biosynthesis; terpenoid biosynthesis. Its function is as follows. Monoterpene synthase that catalyzes the formation of (3R)-linalool from geranyl diphosphate, but not from isopentenyl diphosphate, dimethylallyl diphosphate, chrysanthemyl diphosphate, farnesyl diphosphate, (+)-copalyl diphosphate or geranylgeranyl diphosphate. The protein is R-linalool synthase QH5, chloroplastic of Artemisia annua (Sweet wormwood).